Consider the following 130-residue polypeptide: Small ribosomal subunit protein uS11 (130 aa).

The protein belongs to the universal ribosomal protein uS11 family. As to quaternary structure, part of the 30S ribosomal subunit. Interacts with proteins S7 and S18. Binds to IF-3.

Its function is as follows. Located on the platform of the 30S subunit, it bridges several disparate RNA helices of the 16S rRNA. Forms part of the Shine-Dalgarno cleft in the 70S ribosome. This chain is Small ribosomal subunit protein uS11, found in Shewanella denitrificans (strain OS217 / ATCC BAA-1090 / DSM 15013).